A 218-amino-acid polypeptide reads, in one-letter code: Large ribosomal subunit protein bL25 (218 aa).

The disordered stretch occupies residues 178–218; that stretch reads VTPPTVTEDPDATEEDNTTAESVEATGERNDDNLDRPGRVE. Residues 185-195 show a composition bias toward acidic residues; it reads EDPDATEEDNT. Positions 203 to 218 are enriched in basic and acidic residues; sequence TGERNDDNLDRPGRVE.

It belongs to the bacterial ribosomal protein bL25 family. CTC subfamily. Part of the 50S ribosomal subunit; part of the 5S rRNA/L5/L18/L25 subcomplex. Contacts the 5S rRNA. Binds to the 5S rRNA independently of L5 and L18.

Functionally, this is one of the proteins that binds to the 5S RNA in the ribosome where it forms part of the central protuberance. This Shouchella clausii (strain KSM-K16) (Alkalihalobacillus clausii) protein is Large ribosomal subunit protein bL25.